The chain runs to 357 residues: tRNA pseudouridine synthase D (357 aa).

Catalysis depends on Asp76, which acts as the Nucleophile. Residues 151 to 331 form the TRUD domain; sequence GMPNYFGYQR…DGRYKDEEAQ (181 aa).

Belongs to the pseudouridine synthase TruD family.

The enzyme catalyses uridine(13) in tRNA = pseudouridine(13) in tRNA. In terms of biological role, responsible for synthesis of pseudouridine from uracil-13 in transfer RNAs. The chain is tRNA pseudouridine synthase D from Sulfurimonas denitrificans (strain ATCC 33889 / DSM 1251) (Thiomicrospira denitrificans (strain ATCC 33889 / DSM 1251)).